Reading from the N-terminus, the 312-residue chain is MIEFKKPNITVVDQEDSYGKFVVEPLERGFGTTLGNSLRRVLLTSVPGTGLVKVKIDGILHEFTTVPGVKEDVTKIILNLKKLELRAYTEEVKTIELDVEGPATVTAEDLKADADVEVLNPDQYICTIAQGGHLHMWIDVCNGRGYVPASENKTAEMSIGDIPVDSLFSPIEKVNYQVESTRVGKREDFDKLTLEIWTNGSIAPNDALNFAARVLVEHFKAFESADAAAEIGEVMVEQENDQKEKKLEMTIEDLDLSVRSYNCLKRAGINTLQDLTVKSEAEMMRVRNLGRKSLEEVKNKLADLGLSLRQED.

The segment at 1–226 (MIEFKKPNIT…EHFKAFESAD (226 aa)) is alpha N-terminal domain (alpha-NTD). The alpha C-terminal domain (alpha-CTD) stretch occupies residues 243–312 (KEKKLEMTIE…DLGLSLRQED (70 aa)).

This sequence belongs to the RNA polymerase alpha chain family. As to quaternary structure, homodimer. The RNAP catalytic core consists of 2 alpha, 1 beta, 1 beta' and 1 omega subunit. When a sigma factor is associated with the core the holoenzyme is formed, which can initiate transcription.

The catalysed reaction is RNA(n) + a ribonucleoside 5'-triphosphate = RNA(n+1) + diphosphate. Functionally, DNA-dependent RNA polymerase catalyzes the transcription of DNA into RNA using the four ribonucleoside triphosphates as substrates. The sequence is that of DNA-directed RNA polymerase subunit alpha from Lactobacillus delbrueckii subsp. bulgaricus (strain ATCC 11842 / DSM 20081 / BCRC 10696 / JCM 1002 / NBRC 13953 / NCIMB 11778 / NCTC 12712 / WDCM 00102 / Lb 14).